The chain runs to 202 residues: Small ribosomal subunit protein uS2 (202 aa).

The protein belongs to the universal ribosomal protein uS2 family. In terms of assembly, part of the 30S ribosomal subunit.

The protein is Small ribosomal subunit protein uS2 of Pyrococcus furiosus (strain ATCC 43587 / DSM 3638 / JCM 8422 / Vc1).